A 688-amino-acid chain; its full sequence is Pentatricopeptide repeat-containing protein At3g18020 (688 aa).

17 PPR repeats span residues 53 to 88, 89 to 123, 124 to 158, 161 to 195, 196 to 230, 231 to 261, 271 to 305, 306 to 340, 341 to 375, 376 to 406, 411 to 445, 446 to 480, 482 to 517, 518 to 552, 553 to 583, 588 to 622, and 623 to 657; these read DRAYWRRRIHSICAVRRNPDEALRILDGLCLRGYRP, DSLNLSSVIHSLCDAGRFDEAHRRFLLFLASGFIP, DERTCNVIIARLLYSRSPVSTLGVIHRLIGFKKEF, SLTNYNRLMNQLCTIYRVIDAHKLVFDMRNRGHLP, DVVTFTTLIGGYCEIRELEVAHKVFDEMRVCGIRP, NSLTLSVLIGGFLKMRDVETGRKLMKELWEY, KAAAFANLVDSMCREGYFNDIFEIAENMSLCESVN, VEFAYGHMIDSLCRYRRNHGAARIVYIMKSKGLKP, RRTSYNAIIHGLCKDGGCMRAYQLLEEGSEFEFFP, SEYTYKLLMESLCKELDTGKARNVLELMLRK, RTRIYNIYLRGLCVMDNPTEILNVLVSMLQGDCRP, DEYTLNTVINGLCKMGRVDDAMKVLDDMMTGKFCA, DAVTLNTVMCGLLAQGRAEEALDVLNRVMPENKIKP, GVVAYNAVIRGLFKLHKGDEAMSVFGQLEKASVTA, DSTTYAIIIDGLCVTNKVDMAKKFWDDVIWP, DAFVYAAFLKGLCQSGYLSDACHFLYDLADSGAIP, and NVVCYNTVIAECSRSGLKREAYQILEEMRKNGQAP.

This sequence belongs to the PPR family. P subfamily.

This Arabidopsis thaliana (Mouse-ear cress) protein is Pentatricopeptide repeat-containing protein At3g18020.